We begin with the raw amino-acid sequence, 319 residues long: MKPVFLDFEQPIAELTNKIDELRFVQDESAVDISDEIHRLQKKSNDLTKSIFSKLTPAQVSQVSRHPQRPYTLDYIEALFTDFEELHGDRHFADDYAIVGGLARFNGQSVMVVGHQKGRDTKEKIRRNFGMPRPEGYRKALRLMKTAEKFGLPVMTFIDTPGAYPGIGAEERGQSEAIGKNLYELTRLHVPVLCTVIGEGGSGGALAVAVGDYVNMLQYSTYSVISPEGCASILWKTAEKAADAAQALGITADRLQKLDLVDTVIKEPLGGAHRDFGQTMKNVKAVLEKQLHEAQSIPLADLLSRRFDRIMAYGKFSEQ.

The CoA carboxyltransferase C-terminal domain maps to 39-293; it reads RLQKKSNDLT…KAVLEKQLHE (255 aa).

It belongs to the AccA family. As to quaternary structure, acetyl-CoA carboxylase is a heterohexamer composed of biotin carboxyl carrier protein (AccB), biotin carboxylase (AccC) and two subunits each of ACCase subunit alpha (AccA) and ACCase subunit beta (AccD).

Its subcellular location is the cytoplasm. The catalysed reaction is N(6)-carboxybiotinyl-L-lysyl-[protein] + acetyl-CoA = N(6)-biotinyl-L-lysyl-[protein] + malonyl-CoA. It functions in the pathway lipid metabolism; malonyl-CoA biosynthesis; malonyl-CoA from acetyl-CoA: step 1/1. Component of the acetyl coenzyme A carboxylase (ACC) complex. First, biotin carboxylase catalyzes the carboxylation of biotin on its carrier protein (BCCP) and then the CO(2) group is transferred by the carboxyltransferase to acetyl-CoA to form malonyl-CoA. The protein is Acetyl-coenzyme A carboxylase carboxyl transferase subunit alpha of Neisseria meningitidis serogroup C (strain 053442).